A 255-amino-acid chain; its full sequence is Malonyl-[acyl-carrier protein] O-methyltransferase (255 aa).

Belongs to the methyltransferase superfamily.

The enzyme catalyses malonyl-[ACP] + S-adenosyl-L-methionine = malonyl-[ACP] methyl ester + S-adenosyl-L-homocysteine. It functions in the pathway cofactor biosynthesis; biotin biosynthesis. Converts the free carboxyl group of a malonyl-thioester to its methyl ester by transfer of a methyl group from S-adenosyl-L-methionine (SAM). It allows to synthesize pimeloyl-ACP via the fatty acid synthetic pathway. In Serratia marcescens, this protein is Malonyl-[acyl-carrier protein] O-methyltransferase.